A 1041-amino-acid polypeptide reads, in one-letter code: Protein SMAX1-like (1041 aa).

Positions 8–188 constitute a Clp R domain; it reads IQQTLTPEAA…KSIIEQSLSA (181 aa). 2 repeat regions span residues 12 to 98 and 117 to 188; these read LTPE…LDRL and VSNA…SLSA. The span at 189–205 shows a compositional bias: low complexity; sequence PSPCPSAAASTTTAGPG. Disordered regions lie at residues 189–214, 482–513, and 889–913; these read PSPCPSAAASTTTAGPGPLSPSPSPL, EAEQTDKPASRPEAAKPGLPHWLQLSNDQNKA, and EGSHNSSDVSVEQEQEKGQLAVKRS. The span at 482–495 shows a compositional bias: basic and acidic residues; it reads EAEQTDKPASRPEA. Residues 891 to 900 show a composition bias toward polar residues; the sequence is SHNSSDVSVE.

It belongs to the ClpA/ClpB family.

Its function is as follows. May act downstream of MAX2 to negatively regulate karrikins/strigolactone responses. Acts probably specifically in the karrikin pathway. May function in a transcriptional corepressor complex. The sequence is that of Protein SMAX1-like from Oryza sativa subsp. japonica (Rice).